We begin with the raw amino-acid sequence, 750 residues long: Photosystem I P700 chlorophyll a apoprotein A1 (750 aa).

8 consecutive transmembrane segments (helical) span residues 70-93 (VFSA…FHGA), 156-179 (LYCT…FHYH), 195-219 (LNHH…HVSL), 291-309 (IAHH…GHMY), 346-369 (WHAQ…HHMY), 385-411 (LSLF…IFMV), 433-455 (AIIS…LYIH), and 531-549 (FLVH…LILL). [4Fe-4S] cluster-binding residues include Cys573 and Cys582. The next 2 helical transmembrane spans lie at 589 to 610 (HVFL…HFSW) and 664 to 686 (LSAY…MFLF). His675 is a binding site for chlorophyll a'. Residues Met683 and Tyr691 each coordinate chlorophyll a. Trp692 contributes to the phylloquinone binding site. The chain crosses the membrane as a helical span at residues 724–744 (AVGVTHYLLGGIATTWAFFLA).

Belongs to the PsaA/PsaB family. In terms of assembly, the PsaA/B heterodimer binds the P700 chlorophyll special pair and subsequent electron acceptors. PSI consists of a core antenna complex that captures photons, and an electron transfer chain that converts photonic excitation into a charge separation. The eukaryotic PSI reaction center is composed of at least 11 subunits. P700 is a chlorophyll a/chlorophyll a' dimer, A0 is one or more chlorophyll a, A1 is one or both phylloquinones and FX is a shared 4Fe-4S iron-sulfur center. is required as a cofactor.

The protein resides in the plastid. The protein localises to the chloroplast thylakoid membrane. It carries out the reaction reduced [plastocyanin] + hnu + oxidized [2Fe-2S]-[ferredoxin] = oxidized [plastocyanin] + reduced [2Fe-2S]-[ferredoxin]. Functionally, psaA and PsaB bind P700, the primary electron donor of photosystem I (PSI), as well as the electron acceptors A0, A1 and FX. PSI is a plastocyanin-ferredoxin oxidoreductase, converting photonic excitation into a charge separation, which transfers an electron from the donor P700 chlorophyll pair to the spectroscopically characterized acceptors A0, A1, FX, FA and FB in turn. Oxidized P700 is reduced on the lumenal side of the thylakoid membrane by plastocyanin. This is Photosystem I P700 chlorophyll a apoprotein A1 from Morus indica (Mulberry).